Consider the following 264-residue polypeptide: Thymidylate synthase (264 aa).

Arg21 serves as a coordination point for dUMP. His51 lines the (6R)-5,10-methylene-5,6,7,8-tetrahydrofolate pocket. 126–127 contacts dUMP; sequence RR. Cys146 serves as the catalytic Nucleophile. Residues 166–169, Asn177, and 207–209 contribute to the dUMP site; these read RSCD and HLY. (6R)-5,10-methylene-5,6,7,8-tetrahydrofolate is bound at residue Asp169. Ala263 serves as a coordination point for (6R)-5,10-methylene-5,6,7,8-tetrahydrofolate.

This sequence belongs to the thymidylate synthase family. Bacterial-type ThyA subfamily. In terms of assembly, homodimer.

Its subcellular location is the cytoplasm. It catalyses the reaction dUMP + (6R)-5,10-methylene-5,6,7,8-tetrahydrofolate = 7,8-dihydrofolate + dTMP. The protein operates within pyrimidine metabolism; dTTP biosynthesis. Its function is as follows. Catalyzes the reductive methylation of 2'-deoxyuridine-5'-monophosphate (dUMP) to 2'-deoxythymidine-5'-monophosphate (dTMP) while utilizing 5,10-methylenetetrahydrofolate (mTHF) as the methyl donor and reductant in the reaction, yielding dihydrofolate (DHF) as a by-product. This enzymatic reaction provides an intracellular de novo source of dTMP, an essential precursor for DNA biosynthesis. The protein is Thymidylate synthase of Shigella boydii serotype 4 (strain Sb227).